The following is a 56-amino-acid chain: uncharacterized protein (56 aa).

4Fe-4S ferredoxin-type domains are found at residues 2–28 (VKID…NLIE) and 29–56 (HIIV…LEGE). Residues Cys9, Cys12, Cys15, Cys19, Cys38, Cys41, Cys44, and Cys48 each contribute to the [4Fe-4S] cluster site.

[4Fe-4S] cluster serves as cofactor.

Functionally, ferredoxins are iron-sulfur proteins that transfer electrons in a wide variety of metabolic reactions. This is an uncharacterized protein from Methanocaldococcus jannaschii (strain ATCC 43067 / DSM 2661 / JAL-1 / JCM 10045 / NBRC 100440) (Methanococcus jannaschii).